The primary structure comprises 347 residues: Selenide, water dikinase (347 aa).

Residue Cys-17 is part of the active site. ATP contacts are provided by residues Lys-20 and 48–50; that span reads TRD. Asp-51 contributes to the Mg(2+) binding site. Residues Asp-68, Asp-91, and 139–141 contribute to the ATP site; that span reads GHS. Asp-91 serves as a coordination point for Mg(2+). Asp-227 is a Mg(2+) binding site.

Belongs to the selenophosphate synthase 1 family. Class I subfamily. Homodimer. The cofactor is Mg(2+).

The catalysed reaction is hydrogenselenide + ATP + H2O = selenophosphate + AMP + phosphate + 2 H(+). Its function is as follows. Synthesizes selenophosphate from selenide and ATP. This Cronobacter sakazakii (strain ATCC BAA-894) (Enterobacter sakazakii) protein is Selenide, water dikinase.